The following is a 213-amino-acid chain: Imidazole glycerol phosphate synthase subunit HisH (213 aa).

The Glutamine amidotransferase type-1 domain maps to 1-212 (MLAILDYKAG…HRYCTEAADA (212 aa)). The active-site Nucleophile is the Cys79. Active-site residues include His187 and Glu189.

As to quaternary structure, heterodimer of HisH and HisF.

Its subcellular location is the cytoplasm. The catalysed reaction is 5-[(5-phospho-1-deoxy-D-ribulos-1-ylimino)methylamino]-1-(5-phospho-beta-D-ribosyl)imidazole-4-carboxamide + L-glutamine = D-erythro-1-(imidazol-4-yl)glycerol 3-phosphate + 5-amino-1-(5-phospho-beta-D-ribosyl)imidazole-4-carboxamide + L-glutamate + H(+). The enzyme catalyses L-glutamine + H2O = L-glutamate + NH4(+). Its pathway is amino-acid biosynthesis; L-histidine biosynthesis; L-histidine from 5-phospho-alpha-D-ribose 1-diphosphate: step 5/9. Its function is as follows. IGPS catalyzes the conversion of PRFAR and glutamine to IGP, AICAR and glutamate. The HisH subunit catalyzes the hydrolysis of glutamine to glutamate and ammonia as part of the synthesis of IGP and AICAR. The resulting ammonia molecule is channeled to the active site of HisF. The chain is Imidazole glycerol phosphate synthase subunit HisH from Nitratidesulfovibrio vulgaris (strain ATCC 29579 / DSM 644 / CCUG 34227 / NCIMB 8303 / VKM B-1760 / Hildenborough) (Desulfovibrio vulgaris).